The chain runs to 237 residues: RNA polymerase sigma-28 factor (237 aa).

Positions 1–19 (MSLFAAIGYMVREVFVFVS) are excised as a propeptide. The Polymerase core binding motif lies at 77–90 (DLISIGTIGLIKAI). The H-T-H motif DNA-binding region spans 197 to 206 (QREIAKALGI).

It belongs to the sigma-70 factor family. In terms of processing, proteolytically cleaved in the N-terminus probably by a SpoIIGA homolog to yield the active peptide.

In terms of biological role, sigma factors are initiation factors that promote the attachment of RNA polymerase to specific initiation sites and are then released. This sigma factor directs the transcription of crystal protein genes, a sporulation-regulated event. The chain is RNA polymerase sigma-28 factor (sigK) from Bacillus thuringiensis subsp. kurstaki.